The following is a 144-amino-acid chain: Maximins 11/H1 (144 aa).

An N-terminal signal peptide occupies residues M1 to A18. Positions R19–R43 are excised as a propeptide. N70 carries the asparagine amide modification. Residues T74–R123 constitute a propeptide that is removed on maturation. At L143 the chain carries Leucine amide.

Belongs to the bombinin family. As to expression, expressed by the skin glands.

It is found in the secreted. Maximin-11 shows antimicrobial activity against bacteria and against the fungus C.albicans. It has little hemolytic activity. Functionally, maximin-H1 shows antibacterial activity against both Gram-positive and Gram-negative bacteria. It also shows antimicrobial activity against the fungus C.albicans. Shows strong hemolytic activity. This Bombina maxima (Giant fire-bellied toad) protein is Maximins 11/H1.